We begin with the raw amino-acid sequence, 191 residues long: CASP-like protein 4C3 (191 aa).

At 1-29 the chain is on the cytoplasmic side; it reads METGDSAVKSSQDVHYYGKSTAQKHRRSN. A helical transmembrane segment spans residues 30 to 50; sequence GIILIFRALTFSFSLTSVIVM. Over 51-72 the chain is Extracellular; the sequence is GTNRHRIDAQSRVAWYDFDPFR. Residues 73–93 form a helical membrane-spanning segment; that stretch reads YVLAVNAIICIYSFVEIWLAV. Topologically, residues 94 to 116 are cytoplasmic; that stretch reads YTYLKDTLFLPETFQVWFDYGHD. The helical transmembrane segment at 117–137 threads the bilayer; that stretch reads QGFAYLLFSANSAGIAMAQLL. Residues 138-162 are Extracellular-facing; that stretch reads QSGNSLIHGAYRCSDAGVFCTQARA. The helical transmembrane segment at 163–183 threads the bilayer; sequence SIGLGFGAFLFLALSSLLTGL. The Cytoplasmic portion of the chain corresponds to 184–191; the sequence is RVARWYFS.

Belongs to the Casparian strip membrane proteins (CASP) family. Homodimer and heterodimers.

Its subcellular location is the cell membrane. This Physcomitrium patens (Spreading-leaved earth moss) protein is CASP-like protein 4C3.